A 550-amino-acid polypeptide reads, in one-letter code: Methionine--tRNA ligase (550 aa).

A 'HIGH' region motif is present at residues 13-23 (PYANGEIHLGH). The Zn(2+) site is built by Cys144, Cys147, Cys157, and Cys160. The 'KMSKS' region signature appears at 329 to 333 (KMSKS). Lys332 contributes to the ATP binding site.

Belongs to the class-I aminoacyl-tRNA synthetase family. MetG type 1 subfamily. Monomer. The cofactor is Zn(2+).

Its subcellular location is the cytoplasm. The catalysed reaction is tRNA(Met) + L-methionine + ATP = L-methionyl-tRNA(Met) + AMP + diphosphate. In terms of biological role, is required not only for elongation of protein synthesis but also for the initiation of all mRNA translation through initiator tRNA(fMet) aminoacylation. The chain is Methionine--tRNA ligase from Ruthia magnifica subsp. Calyptogena magnifica.